The following is a 1049-amino-acid chain: MPNFFIDRPIFAWVIAIIIMLAGGLAILKLPVAQYPTIAPPAVTISASYPGADAKTVQDTVTQVIEQNMNGIDNLMYMSSNSDSTGTVQITLTFESGTDADIAQVQVQNKLQLAMPLLPQEVQQQGVSVEKSSSSFLMVVGVINTDGTMTQEDISDYVAANMKDAISRTSGVGDVQLFGSQYAMRIWMNPNELNKFQLTPVDVITAIKAQNAQVAAGQLGGTPPVKGQQLNASIIAQTRLTSTEEFGKILLKVNQDGSRVLLRDVAKIELGGENYDIIAEFNGQPASGLGIKLATGANALDTAAAIRAELAKMEPFFPSGLKIVYPYDTTPFVKISIHEVVKTLVEAIILVFLVMYLFLQNFRATLIPTIAVPVVLLGTFAVLAAFGFSINTLTMFGMVLAIGLLVDDAIVVVENVERVMAEEGLPPKEATRKSMGQIQGALVGIAMVLSAVFVPMAFFGGSTGAIYRQFSITIVSAMALSVLVALILTPALCATMLKPIAKGDHGEGKKGFFGWFNRMFEKSTHHYTDSVGGILRSTGRYLVLYLIIVVGMAYLFVRLPSSFLPDEDQGVFMTMVQLPAGATQERTQKVLNEVTHYYLTKEKNNVESVFAVNGFGFAGRGQNTGIAFVSLKDWADRPGEENKVEAITMRATRAFSQIKDAMVFAFNLPAIVELGTATGFDFELIDQAGLGHEKLTQARNQLLAEAAKHPDMLTSVRPNGLEDTPQFKIDIDQEKAQALGVSINDINTTLGAAWGGSYVNDFIDRGRVKKVYVMSEAKYRMLPDDIGDWYVRAADGQMVPFSAFSSSRWEYGSPRLERYNGLPSMEILGQAAPGKSTGEAMELMEQLASKLPTGVGYDWTGMSYQERLSGNQAPSLYAISLIVVFLCLAALYESWSIPFSVMLVVPLGVIGALLAATFRGLTNDVYFQVGLLTTIGLSAKNAILIVEFAKDLMDKEGKGLIEATLDAVRMRLRPILMTSLAFILGVMPLVISTGAGSGAQNAVGTGVMGGMVTATVLAIFFVPVFFVVVRRRFSRKNEDIEHSHTVDHH.

Residues M1–P9 lie on the Cytoplasmic side of the membrane. Residues I10–L28 traverse the membrane as a helical segment. Topologically, residues K29 to S336 are periplasmic. Residues I337–Y356 traverse the membrane as a helical segment. The Cytoplasmic segment spans residues L357–T365. Residues L366–A385 form a helical membrane-spanning segment. Residues F386–N391 are Periplasmic-facing. Residues T392–V413 traverse the membrane as a helical segment. Residues E414–I438 lie on the Cytoplasmic side of the membrane. A helical transmembrane segment spans residues Q439–A457. The Periplasmic segment spans residues F458–A465. Residues I466–P490 form a helical membrane-spanning segment. Topologically, residues A491–T538 are cytoplasmic. Residues G539–L555 form a helical membrane-spanning segment. Topologically, residues F556–N871 are periplasmic. A helical membrane pass occupies residues Q872–L888. Over A889 to P898 the chain is Cytoplasmic. The chain crosses the membrane as a helical span at residues F899 to F918. Topologically, residues R919 to D924 are periplasmic. The chain crosses the membrane as a helical span at residues V925–I943. Residues L944–L972 are Cytoplasmic-facing. Residues R973–S992 form a helical membrane-spanning segment. The Periplasmic segment spans residues T993–G998. The chain crosses the membrane as a helical span at residues A999–A1018. Over I1019–H1049 the chain is Cytoplasmic.

The protein belongs to the resistance-nodulation-cell division (RND) (TC 2.A.6) family. In terms of assembly, homotrimer, with large domains that extend into the periplasm, interacts with AcrA and TolC. AcrA may be required to stably link this protein and TolC. Interacts with AcrZ. Part of the AcrA-AcrB-AcrZ-TolC efflux pump.

The protein localises to the cell inner membrane. In terms of biological role, acrA-AcrB-AcrZ-TolC is a drug efflux protein complex with broad substrate specificity that uses the proton motive force to export substrates. Functionally, (Microbial infection) Involved in contact-dependent growth inhibition (CDI), acts downstream of BamA, the receptor for CDI. Its role in CDI is independent of the AcrA-AcrB-TolC efflux pump complex. The sequence is that of Multidrug efflux pump subunit AcrB (acrB) from Escherichia coli (strain K12).